The primary structure comprises 413 residues: Oxidoreductase vrtI (413 aa).

In terms of domain architecture, Fe2OG dioxygenase spans 235–341 (DAESLTTLSM…RYSIAYFLRA (107 aa)). Positions 262, 264, and 319 each coordinate Fe cation. R332 serves as a coordination point for 2-oxoglutarate.

This sequence belongs to the iron/ascorbate-dependent oxidoreductase family.

Its pathway is secondary metabolite biosynthesis; terpenoid biosynthesis. Oxidoreductase; part of the gene cluster that mediates the biosynthesis of viridicatumtoxin, a tetracycline-like fungal meroterpenoid with a unique, fused spirobicyclic ring system. The first step of the pathway is the production of the malonamoyl-CoA starter unit for the polyketide synthase vrtA. The aldolase vrtJ may be involved in the synthesis of the malonamate substrate for malonamoyl-CoA synthetase vrtB. The polyketide synthase vrtA then may utilize the malonamoyl-CoA starter unit, followed by sequential condensation of eight malonyl-CoA units to form the polyketide backbone. The cyclization of the last ring could be mediated by the lactamase-like protein vrtG. The proposed post-PKS tailoring steps are a hydroxylation at C5 catalyzed the cytochrome P450 monooxygenase vrtE, a hydroxylation at C12a catalyzed by VrtH and/or VrtI, and an O-methylation by the O-methyltransferase vrtF. VrtC is then proposed to catalyze the transfer of a geranyl group synthesized by vrtD to the aromatic C ring of the tetracyclic polyketide intermediate of viridicatumtoxin to yield previridicatumtoxin. Finally, the cytochrome P450 monooxygenase vrtK catalyzes the spirocyclization of the geranyl moiety of previridicatumtoxin to afford viridicatumtoxin. This is Oxidoreductase vrtI from Penicillium aethiopicum.